Here is a 350-residue protein sequence, read N- to C-terminus: Membrane progestin receptor alpha (350 aa).

The Cytoplasmic segment spans residues 1–80 (MATMVAQKLS…HNEAVNVWTH (80 aa)). A helical membrane pass occupies residues 81-101 (LLAALVLLLRLAIFVGTVDFW). Residues 102 to 105 (GDPH) are Extracellular-facing. The helical transmembrane segment at 106-126 (ALPLFIIVLASFTYLSLSALA) threads the bilayer. Topologically, residues 127–139 (HLLQAKSEFWHYS) are cytoplasmic. Residues 140-160 (FFFLDYVGVAVYQFGSALAHF) form a helical membrane-spanning segment. Residues 161-165 (YYAIE) are Extracellular-facing. The helical transmembrane segment at 166–186 (PAWHAQVQTIFLPMAAFLAWL) threads the bilayer. Residues 187 to 239 (SCTGSCYNKYIQKPGLLGRTCQEVPSALAYALDISPVAHRILASPEPATDDPA) are Cytoplasmic-facing. A helical membrane pass occupies residues 240 to 260 (LLYHKCQVVFFLLAAAFFSAF). Residues 261–278 (MPERWFPGSCHIFGQGHQ) are Extracellular-facing. A helical transmembrane segment spans residues 279-299 (LFHVFLVLCTLAQLEAVALDY). The Cytoplasmic segment spans residues 300–318 (EARRPIYEPLHTRWPHNFS). The chain crosses the membrane as a helical span at residues 319 to 339 (GLFLLTVGSSILTAFLLSQLV). Over 340 to 350 (RRKLDLDRKTQ) the chain is Extracellular.

This sequence belongs to the ADIPOR family.

The protein resides in the cell membrane. Its function is as follows. Plasma membrane progesterone (P4) receptor coupled to G proteins. Seems to act through a G(i) mediated pathway. May be involved in oocyte maturation. Involved in neurosteroid inhibition of apoptosis. Also binds dehydroepiandrosterone (DHEA), pregnanolone, pregnenolone and allopregnanolone. The sequence is that of Membrane progestin receptor alpha (PAQR7) from Sus scrofa (Pig).